Reading from the N-terminus, the 326-residue chain is MSRLLLAPMEGVADFVMRDVLTSVGGYDGCVSEFVRVTGSLLPARTYERETPEIRNGGYTASGTPMVIQLLGSDPEWLARNAAQAATVSPHGIDLNFGCPAKVVNRHGGGAMLLATPELLHRIVSTVRAAVPARIAVTAKMRLGVSDTSLAIACATALAEGGAASLVVHARTRDHGYRPPAHWDWIARIADAVRVPVVANGEVWTVDDWARCRAVSGCDDVMIGRGAVSDPFLALRIRGQMARQPSDAEWPLVLGCLADYLKKLRARIAIHHEHGRVKLWLGYLKRTWPQAAELHDAIRRLQDSAEILGVIEHALARIGQQSAPAG.

FMN is bound by residues 8–10 (PME) and Q69. The Proton donor role is filled by C99. FMN contacts are provided by residues K140, 200 to 202 (NGE), and 224 to 225 (GR).

This sequence belongs to the Dus family. DusC subfamily. It depends on FMN as a cofactor.

The enzyme catalyses 5,6-dihydrouridine(16) in tRNA + NADP(+) = uridine(16) in tRNA + NADPH + H(+). It catalyses the reaction 5,6-dihydrouridine(16) in tRNA + NAD(+) = uridine(16) in tRNA + NADH + H(+). Functionally, catalyzes the synthesis of 5,6-dihydrouridine (D), a modified base found in the D-loop of most tRNAs, via the reduction of the C5-C6 double bond in target uridines. Specifically modifies U16 in tRNAs. The chain is tRNA-dihydrouridine(16) synthase from Ralstonia nicotianae (strain ATCC BAA-1114 / GMI1000) (Ralstonia solanacearum).